Here is a 450-residue protein sequence, read N- to C-terminus: MTPTPGEADLTNTPAPRARRSVLSRGSWSETARIAGILRKETVGGAVLLVASAVALVWANSPWAESYFALRDLKIGAEPFGLHLNLTLGTWAADGLLAVFFLVVGLELKREFVAGDLRDPARAALPMAAAVGGMVVPALIFVAVTAPVGDGATRGWAIPTATDIAFAVAVLAVISTHLPAALRTFLLTLAVVDDLLAVTVIAVFYTDEINLTALGLSIVPLALFALCVQRRIRSWWLLLPLGVATWVLMHESGVHATVAGVLLGFTVPVLRSVAAGGPEAGPGLAEHFEHRLRPLSAGVAVPVFAFFAAGVAIGGVSGLTRALSDPITLGIILGLVVGKPVGIFLTTRVLTAVTRANLDDALRWIDVFGVALLAGIGFTVSLLIGDLAYGLGSDRDDFVKVGVLTGSLVAALIAAVLLRVRNRHYRAVWLQETADTDRDGVPDVYQSQRD.

Helical transmembrane passes span 43-63 (VGGA…NSPW), 86-106 (LTLG…VVGL), 124-144 (ALPM…FVAV), 155-175 (GWAI…AVIS), 185-205 (FLLT…AVFY), 208-228 (EINL…ALCV), 234-254 (SWWL…ESGV), 258-278 (VAGV…AGGP), 299-319 (VAVP…VSGL), 326-346 (PITL…IFLT), 364-384 (WIDV…SLLI), and 398-418 (FVKV…AVLL).

It belongs to the NhaA Na(+)/H(+) (TC 2.A.33) antiporter family.

The protein resides in the cell membrane. The catalysed reaction is Na(+)(in) + 2 H(+)(out) = Na(+)(out) + 2 H(+)(in). Its function is as follows. Na(+)/H(+) antiporter that extrudes sodium in exchange for external protons. The sequence is that of Na(+)/H(+) antiporter NhaA 2 from Mycobacterium sp. (strain KMS).